Consider the following 300-residue polypeptide: NAD kinase (300 aa).

Residue Asp-80 is the Proton acceptor of the active site. NAD(+) contacts are provided by residues 80 to 81 (DG), 154 to 155 (ND), Arg-165, Arg-182, Asp-184, 195 to 200 (TAYALS), and Gln-253.

It belongs to the NAD kinase family. A divalent metal cation serves as cofactor.

Its subcellular location is the cytoplasm. The enzyme catalyses NAD(+) + ATP = ADP + NADP(+) + H(+). Functionally, involved in the regulation of the intracellular balance of NAD and NADP, and is a key enzyme in the biosynthesis of NADP. Catalyzes specifically the phosphorylation on 2'-hydroxyl of the adenosine moiety of NAD to yield NADP. The protein is NAD kinase of Aromatoleum aromaticum (strain DSM 19018 / LMG 30748 / EbN1) (Azoarcus sp. (strain EbN1)).